A 952-amino-acid polypeptide reads, in one-letter code: G patch domain-containing protein 1 homolog (952 aa).

6 disordered regions span residues 104–127, 165–233, 320–345, 370–432, 660–711, and 822–952; these read QGIRTRDEFANEDEQKQRSDQRRR, GWKP…DDYE, DKKPKQKKQQHVQQRHVIDGFSEDNS, RSRF…KDHS, PEKV…RNKP, and VAPE…KSKH. Basic and acidic residues predominate over residues 107 to 123; sequence RTRDEFANEDEQKQRSD. The region spanning 153 to 199 is the G-patch domain; that stretch reads RDKVAVRILKSMGWKPGQGVGPRQTRKEKRQATARNSKEQYLMEHYG. Positions 214–233 are enriched in acidic residues; sequence DSNNEDEDDEDITFAPDDYE. Basic residues predominate over residues 323 to 333; sequence PKQKKQQHVQQ. Composition is skewed to basic and acidic residues over residues 375-402, 414-432, and 679-691; these read PMDKERAQKLETASEYKRSGLGRHDLNP, QEEKTAEEQPKRNPFKDHS, and IQDKPNTKEEPSK. Positions 886 to 896 are enriched in low complexity; it reads ASSSNESSSSD. 2 stretches are compositionally biased toward basic residues: residues 906–934 and 941–952; these read KLSKPKKSHKGSSSKKSKKSKLKSKKKSK and HKAKKKKKKSKH.

This sequence belongs to the GPATCH1 family.

The chain is G patch domain-containing protein 1 homolog from Drosophila melanogaster (Fruit fly).